A 261-amino-acid chain; its full sequence is Esterase citA (261 aa).

Active-site charge relay system residues include Ser-122, Asp-207, and His-235.

Belongs to the LovG family.

It participates in mycotoxin biosynthesis. Its function is as follows. Non-reducing polyketide synthase; part of the gene cluster that mediates the biosynthesis of the mycotoxin citrinin, a hepato-nephrotoxic compound to humans due to inhibition of respiration complex III. The pathway begins with the synthesis of a keto-aldehyde intermediate by the citrinin PKS (pksCT also named citS) from successive condensations of 4 malonyl-CoA units, presumably with a simple acetyl-CoA starter unit. Release of the keto-aldehyde intermediate is consistent with the presence of the C-terminal reductive release domain. CitA collaborates with citS by catalyzing the hydrolysis of ACP-bound acyl intermediates to free the ACP from stalled intermediates. CitB then catalyzes the oxidation of the C-12 methyl of the ketone intermediate to an alcohol intermediate which is further oxidized by the oxidoreductase citC to produce a bisaldehyde intermediate. The fourth catalytic step is catalyzed by the citD aldehyde dehydrogenase. The final transformation is the reduction of C-3 by citE to provide the chemically stable citrinin nucleus. CitE appears highly selective for its substrate as its presence in any context other than a full complement of citS and citA-D does not result in observable new compounds. This chain is Esterase citA, found in Monascus ruber (Mold).